The following is a 396-amino-acid chain: Elongation factor Tu (396 aa).

A tr-type G domain is found at 10-206; that stretch reads KPHVNVGTIG…VLDTYIPEPE (197 aa). Residues 19–26 are G1; it reads GHVDHGKT. Residue 19–26 participates in GTP binding; sequence GHVDHGKT. Thr-26 contributes to the Mg(2+) binding site. The G2 stretch occupies residues 60 to 64; the sequence is GITIN. The segment at 81–84 is G3; that stretch reads DCPG. GTP contacts are provided by residues 81–85 and 136–139; these read DCPGH and NKCD. The tract at residues 136–139 is G4; that stretch reads NKCD. Residues 174 to 176 are G5; that stretch reads SAT.

The protein belongs to the TRAFAC class translation factor GTPase superfamily. Classic translation factor GTPase family. EF-Tu/EF-1A subfamily. In terms of assembly, monomer.

The protein localises to the cytoplasm. It carries out the reaction GTP + H2O = GDP + phosphate + H(+). In terms of biological role, GTP hydrolase that promotes the GTP-dependent binding of aminoacyl-tRNA to the A-site of ribosomes during protein biosynthesis. The polypeptide is Elongation factor Tu (Psychrobacter arcticus (strain DSM 17307 / VKM B-2377 / 273-4)).